Here is a 101-residue protein sequence, read N- to C-terminus: HssA/B-like protein 40 (101 aa).

A disordered region spans residues 1 to 26; it reads MTLFSSISSMSTSMSGSKSSISSFGS.

This sequence belongs to the hssA/B family.

The sequence is that of HssA/B-like protein 40 (hssl40) from Dictyostelium discoideum (Social amoeba).